The chain runs to 466 residues: Catalase ifgD (466 aa).

The tract at residues 1–22 is disordered; the sequence is MAPNYAKKCPVMGKAPSSGHSS. H48 is a catalytic residue. Residue Y337 coordinates heme.

Belongs to the catalase family. It depends on heme as a cofactor.

It participates in alkaloid biosynthesis; ergot alkaloid biosynthesis. In terms of biological role, catalase; part of the gene cluster that mediates the biosynthesis of isofumigaclavines, fungal ergot alkaloids. The tryptophan dimethylallyltransferase ifgA catalyzes the first step of ergot alkaloid biosynthesis by condensing dimethylallyl diphosphate (DMAP) and tryptophan to form 4-dimethylallyl-L-tryptophan. The second step is catalyzed by the methyltransferase ifgB that methylates 4-dimethylallyl-L-tryptophan in the presence of S-adenosyl-L-methionine, resulting in the formation of N-methyl-dimethylallyl-L-tryptophan. The catalase ifgD and the FAD-dependent oxidoreductase ifgC then transform N-methyl-dimethylallyl-L-tryptophan to chanoclavine-I which is further oxidized by ifgE in the presence of NAD(+), resulting in the formation of chanoclavine-I aldehyde. The chanoclavine-I aldehyde reductases ifgG and/or fgaOx3 reduce chanoclavine-I aldehyde to dihydrochanoclavine-I aldehyde that spontaneously dehydrates to form 6,8-dimethyl-6,7-didehydroergoline. The festuclavine dehydrogenases ifgF1 and/or ifgF2 then catalyze the reduction of 6,8-dimethyl-6,7-didehydroergoline to form festuclavine. Hydrolysis of festuclavine by a yet undetermined cytochrome P450 monooxygenase (called ifgH) then leads to the formation of isofumigaclavine B which is in turn acetylated by ifgI to isofumigaclavine A. Penicillium roqueforti has interestingly at least two sets of genes for the consumption of chanoclavine-I aldehyde on three different loci, the OYEs ifgG/fgaOx3 and the festuclavine synthase homologs ifgF1/ifgF2. The reason for the duplication of these genes is unclear, probably to ensure the conversion of chanoclavine-I aldehyde by differential gene expression under various environmental conditions. This chain is Catalase ifgD, found in Penicillium roqueforti (strain FM164).